Reading from the N-terminus, the 396-residue chain is Penicillopepsin-1 (396 aa).

A signal peptide spans 1–20 (MVVFSKVTASLACFSAVVSA). The propeptide at 21-72 (AAVPVKSPRQGFSVNQVQKTVTGTRTVNLPGVYANALAKYGATVPANVHAAA) is activation peptide. In terms of domain architecture, Peptidase A1 spans 88 to 393 (YLTPVKIGES…DAEGPRLGFA (306 aa)). Residues aspartate 104 and aspartate 285 contribute to the active site. An N-linked (GlcNAc...) asparagine glycan is attached at asparagine 311. Cysteine 321 and cysteine 356 are oxidised to a cystine.

The protein belongs to the peptidase A1 family. Monomer.

It is found in the secreted. The enzyme catalyses Hydrolysis of proteins with broad specificity similar to that of pepsin A, preferring hydrophobic residues at P1 and P1', but also cleaving 20-Gly-|-Glu-21 in the B chain of insulin. Clots milk, and activates trypsinogen.. Secreted aspartic endopeptidase that allows assimilation of proteinaceous substrates. The scissile peptide bond is attacked by a nucleophilic water molecule activated by two aspartic residues in the active site. Shows a broad primary substrate specificity. Favors hydrophobic residues at the P1 and P1' positions, but can also activate trypsinogen and hydrolyze the B chain of insulin between positions 'Gly-20' and 'Glu-21'. In Penicillium rubens (strain ATCC 28089 / DSM 1075 / NRRL 1951 / Wisconsin 54-1255) (Penicillium chrysogenum), this protein is Penicillopepsin-1 (pepA).